We begin with the raw amino-acid sequence, 730 residues long: Guanylate cyclase soluble subunit alpha-2 (730 aa).

The disordered stretch occupies residues 1-53; it reads MSRRKISSESFSSLGSDYLETSPEEEGECPLSKLCWNGSRSPPGPPGSRAAAM. The region spanning 519 to 646 is the Guanylate cyclase domain; it reads TMLFSDIVGF…NNVTLASKFE (128 aa).

The protein belongs to the adenylyl cyclase class-4/guanylyl cyclase family. In terms of assembly, heterodimer of an alpha and a beta chain.

It localises to the cytoplasm. It carries out the reaction GTP = 3',5'-cyclic GMP + diphosphate. Its activity is regulated as follows. Activated by nitric oxide in the presence of magnesium or manganese ions. Has guanylyl cyclase on binding to the beta-1 subunit. The protein is Guanylate cyclase soluble subunit alpha-2 (Gucy1a2) of Rattus norvegicus (Rat).